Reading from the N-terminus, the 155-residue chain is Small ribosomal subunit protein uS8m (155 aa).

This sequence belongs to the universal ribosomal protein uS8 family. In terms of assembly, component of the mitochondrial small ribosomal subunit (mt-SSU). Mature yeast 74S mitochondrial ribosomes consist of a small (37S) and a large (54S) subunit. The 37S small subunit contains a 15S ribosomal RNA (15S mt-rRNA) and 34 different proteins. The 54S large subunit contains a 21S rRNA (21S mt-rRNA) and 46 different proteins.

The protein localises to the mitochondrion. Functionally, component of the mitochondrial ribosome (mitoribosome), a dedicated translation machinery responsible for the synthesis of mitochondrial genome-encoded proteins, including at least some of the essential transmembrane subunits of the mitochondrial respiratory chain. The mitoribosomes are attached to the mitochondrial inner membrane and translation products are cotranslationally integrated into the membrane. The polypeptide is Small ribosomal subunit protein uS8m (MRPS8) (Saccharomyces cerevisiae (strain ATCC 204508 / S288c) (Baker's yeast)).